The primary structure comprises 529 residues: Zinc finger protein 490 (529 aa).

Positions 1–53 are disordered; that stretch reads MRRNSSLSFQMERPLEEQVQSKWSSSQGRTGTGGSDVLQMQNSEHHGQSIKTQ. The 76-residue stretch at 57-132 folds into the KRAB domain; sequence ISLEDVAVNF…ALCENKEDCP (76 aa). 13 C2H2-type zinc fingers span residues 156–178, 194–216, 222–244, 250–272, 278–300, 306–328, 334–356, 362–384, 390–412, 418–440, 446–468, 474–496, and 502–524; these read CDCS…MRSH, HKCK…ERIH, YECK…IRIH, YECK…EKNH, YKCK…ERTH, YECK…EKTH, FVCR…VKTH, YTCK…ERTH, YECK…ERVH, YECK…ERTH, YECK…ERSH, CECK…KRIH, and FQCR…ERTH.

Belongs to the krueppel C2H2-type zinc-finger protein family.

Its subcellular location is the nucleus. Its function is as follows. May be involved in transcriptional regulation. In Homo sapiens (Human), this protein is Zinc finger protein 490 (ZNF490).